The chain runs to 896 residues: DNA mismatch repair protein MutS (896 aa).

Residue 618–625 participates in ATP binding; sequence GPNMSGKS. The segment covering 805–825 has biased composition (basic and acidic residues); it reads GKESTKTGKGENKNISHKTES. The segment at 805-826 is disordered; it reads GKESTKTGKGENKNISHKTESD.

This sequence belongs to the DNA mismatch repair MutS family.

In terms of biological role, this protein is involved in the repair of mismatches in DNA. It is possible that it carries out the mismatch recognition step. This protein has a weak ATPase activity. In Halothermothrix orenii (strain H 168 / OCM 544 / DSM 9562), this protein is DNA mismatch repair protein MutS.